A 91-amino-acid chain; its full sequence is Acylphosphatase (91 aa).

Residues 3–91 enclose the Acylphosphatase-like domain; sequence HIKVNVKGQV…TELTKFEVKY (89 aa). Active-site residues include R18 and N36.

It belongs to the acylphosphatase family.

The catalysed reaction is an acyl phosphate + H2O = a carboxylate + phosphate + H(+). This chain is Acylphosphatase (acyP), found in Oceanobacillus iheyensis (strain DSM 14371 / CIP 107618 / JCM 11309 / KCTC 3954 / HTE831).